The chain runs to 87 residues: Mitotic-spindle organizing protein 1 (87 aa).

The protein belongs to the MOZART1 family. In terms of assembly, part of the gamma-tubulin complex.

It is found in the cytoplasm. The protein localises to the cytoskeleton. Its subcellular location is the microtubule organizing center. The protein resides in the spindle pole body. In terms of biological role, required for gamma-tubulin complex recruitment to the microtubule organizing center (MTOC). This Chaetomium globosum (strain ATCC 6205 / CBS 148.51 / DSM 1962 / NBRC 6347 / NRRL 1970) (Soil fungus) protein is Mitotic-spindle organizing protein 1.